The chain runs to 379 residues: UDP-4-amino-4-deoxy-L-arabinose--oxoglutarate aminotransferase (379 aa).

An N6-(pyridoxal phosphate)lysine modification is found at Lys-182.

This sequence belongs to the DegT/DnrJ/EryC1 family. ArnB subfamily. As to quaternary structure, homodimer. Pyridoxal 5'-phosphate serves as cofactor.

The catalysed reaction is UDP-4-amino-4-deoxy-beta-L-arabinose + 2-oxoglutarate = UDP-beta-L-threo-pentopyranos-4-ulose + L-glutamate. It participates in nucleotide-sugar biosynthesis; UDP-4-deoxy-4-formamido-beta-L-arabinose biosynthesis; UDP-4-deoxy-4-formamido-beta-L-arabinose from UDP-alpha-D-glucuronate: step 2/3. The protein operates within bacterial outer membrane biogenesis; lipopolysaccharide biosynthesis. Catalyzes the conversion of UDP-4-keto-arabinose (UDP-Ara4O) to UDP-4-amino-4-deoxy-L-arabinose (UDP-L-Ara4N). The modified arabinose is attached to lipid A and is required for resistance to polymyxin and cationic antimicrobial peptides. The sequence is that of UDP-4-amino-4-deoxy-L-arabinose--oxoglutarate aminotransferase from Erwinia tasmaniensis (strain DSM 17950 / CFBP 7177 / CIP 109463 / NCPPB 4357 / Et1/99).